The following is a 445-amino-acid chain: Eukaryotic peptide chain release factor subunit 1 (445 aa).

The protein belongs to the eukaryotic release factor 1 family. In terms of assembly, heterodimer of two subunits, one of which binds GTP.

The protein localises to the cytoplasm. Functionally, directs the termination of nascent peptide synthesis (translation) in response to the termination codon UGA. In Stylonchia UAA and UAG codes for glutamine. The chain is Eukaryotic peptide chain release factor subunit 1 (ERF1) from Stylonychia mytilus (Ciliate).